Consider the following 760-residue polypeptide: MSQGECPVKKVPNVAGSGTRNTDWWPNELRTNILRQHDPRQNPLGPDFNYVEEFKKLDYDALKKDLNALMTDSQDWWPADFGHYGGLFIRMAWHSAGTYRVTDGRGGGGDGQQRFAPLNAWPDNVSLDKARRLLWPIKQKYGNKISWADLMLLTGNVALESMGCPTFGFAGGRADTFQSDESVYWGGETEWLGSDVRYADGAKGVKGEGIMDGDQHKTDKSEPHTSRNLEQPLAAAHMGLIYVNPEGPEGIPDPVAAAHDIRTTFGRMAMNDAETAALIIGGHSFGKTHGAAPSENTGPDPNSEDLATQGFGWMNKHGRGNGPDTITSGLEVTWTGTPTKWSNKYLEYLYKFEWELEKSPAGANQWVAKTDEHIIPDAYDQNKKHKPRMLTTDLAMRMDPAYEKITRRWLEHPQELHDTFVRAWFKLLHRDMGPRSRWLGPEVPKEVLIWEDPVPQPEGELIGESDIATLKKQVLDAGVEPAKLIRTAWASAASFRGSDKRGGANGARIRLAPQKDWEVNNPKELAEVLKALEGVQSKFNSGSKKVSLADLIVLAGTAAVEKAAGVQVPFTPGRTDATQEQTDAKSFEHLEPVTDGFRNYGKGTDRVRTEQLDVDKAHLLRLTAPEMVVLTGGMRALNANWDGSSHGVFTKRPGQLTNDFFVNLLDNNLEWKAADSSKELYEGFDRKSGQKKWTATRHDLVFGHHPELRAVAETYAQADNTDKFVKDFVAGWEKIMNNDRFDIKNKSVSAQSRGANKPRL.

The tract at residues 1–22 (MSQGECPVKKVPNVAGSGTRNT) is disordered. The segment at residues 93–242 (WHSAGTYRVT…LAAAHMGLIY (150 aa)) is a cross-link (tryptophyl-tyrosyl-methioninium (Trp-Tyr) (with M-268)). Histidine 94 acts as the Proton acceptor in catalysis. Residues 206–226 (KGEGIMDGDQHKTDKSEPHTS) are disordered. A compositionally biased stretch (basic and acidic residues) spans 213 to 226 (GDQHKTDKSEPHTS). Residues 242-268 (YVNPEGPEGIPDPVAAAHDIRTTFGRM) constitute a cross-link (tryptophyl-tyrosyl-methioninium (Tyr-Met) (with W-93)). Histidine 283 is a heme b binding site.

The protein belongs to the peroxidase family. Peroxidase/catalase subfamily. Homodimer or homotetramer. Requires heme b as cofactor. Post-translationally, formation of the three residue Trp-Tyr-Met cross-link is important for the catalase, but not the peroxidase activity of the enzyme.

It is found in the cytoplasm. The enzyme catalyses H2O2 + AH2 = A + 2 H2O. It carries out the reaction 2 H2O2 = O2 + 2 H2O. Bifunctional enzyme with both catalase and broad-spectrum peroxidase activity. The chain is Catalase-peroxidase from Pyrenophora tritici-repentis (strain Pt-1C-BFP) (Wheat tan spot fungus).